The chain runs to 498 residues: MQHETLLHIQGIDKSFPGVKALSNACLSVYAGRAMALMGENGAGKSTLMKVLTGIYSKDAGTIEYLGKQVTFKGPKESQEAGISIIHQELNLVGNLTIAENIFLGREFVTPWGSIDWKKMHQEADKLLKRLGVSHSSHQLCSELSIGEQQMVEIAKALSFESKVIIMDEPTDALTDTETAALFKVIRELKAEKRGIVYISHRIKEIFEICDDVTVLRDGEFIGEKAVNVLDEDQLIEMMVGRRLDEQYPHLDKPRGELLLEVENLSGSGVHDVSFTLHRGEILGVSGLMGAGRTELMKVLYGALPRSSGKVRLAQQEIHNTCPQDGLNHGIVYISEDRKGDGLILGMSVKENMSLTALAYFSKSIQIDHKAEQLAVGDFITMFNIKTPSQEQQIGLLSGGNQQKVAIAKGLMTRPNVLILDEPTRGVDVGAKKEIYQLINEFKKEGLSIILVSSEMPEVLGMSDRILVMHEGRISAEFQRGEATQEKLLAAAIGKSAL.

ABC transporter domains lie at 7-243 (LHIQ…VGRR) and 254-496 (PRGE…IGKS). 39–46 (GENGAGKS) lines the ATP pocket.

This sequence belongs to the ABC transporter superfamily. Ribose importer (TC 3.A.1.2.1) family. In terms of assembly, the complex is composed of an ATP-binding protein (RbsA), two transmembrane proteins (RbsC) and a solute-binding protein (RbsB).

Its subcellular location is the cell inner membrane. It carries out the reaction D-ribose(out) + ATP + H2O = D-ribose(in) + ADP + phosphate + H(+). Functionally, part of the ABC transporter complex RbsABC involved in ribose import. Responsible for energy coupling to the transport system. The polypeptide is Ribose import ATP-binding protein RbsA 1 (Pasteurella multocida (strain Pm70)).